Here is a 688-residue protein sequence, read N- to C-terminus: Ethylmalonyl-CoA mutase (688 aa).

A B12-binding domain is found at 530–659 (TPRLVVGKPG…VGLAKVVERA (130 aa)). An adenosylcob(III)alamin-binding site is contributed by histidine 543. Positions 666–688 (DRADTEAGVPGAPKRNESGAQVF) are disordered.

It belongs to the methylmalonyl-CoA mutase family. Adenosylcob(III)alamin is required as a cofactor.

The catalysed reaction is (2R)-ethylmalonyl-CoA = (2S)-methylsuccinyl-CoA. Its function is as follows. Radical enzyme that catalyzes the transformation of (2R)-ethylmalonyl-CoA to (2S)-methylsuccinyl-CoA. Is involved in the ethylmalonyl-CoA pathway for acetyl-CoA assimilation required for M.extorquens growth on one- and two-carbon compounds such as ethylamine, methanol or ethanol as sole carbon source. This enzyme acts as a regulatory metabolic control point in this pathway, that allows M.extorquens to efficiently restore metabolic balance when challenged with a sudden change in the growth substrate. The sequence is that of Ethylmalonyl-CoA mutase from Methylorubrum extorquens (strain ATCC 14718 / DSM 1338 / JCM 2805 / NCIMB 9133 / AM1) (Methylobacterium extorquens).